A 113-amino-acid chain; its full sequence is RING-box protein 2 (113 aa).

The segment at 1-26 (MADVEDGEEPCVLSSHSGSAGSKSGG) is disordered. Position 2 is an N-acetylalanine (Ala-2). Residues Cys-50, Cys-53, Cys-61, Cys-64, Cys-73, Cys-80, His-82, His-85, Cys-87, Cys-88, Cys-99, and Cys-102 each contribute to the Zn(2+) site. An RING-type zinc finger spans residues 61 to 103 (CLRCQAENKQEDCVVVWGECNHSFHNCCMSLWVKQNNRCPLCQ).

Belongs to the RING-box family. In terms of assembly, catalytic component of multiple cullin-5-RING E3 ubiquitin-protein ligase complexes (ECS complexes, also named CRL5 complexes) composed of CUL5, Elongin BC (ELOB and ELOC), RNF7/RBX2 and a variable SOCS box domain-containing protein as substrate-specific recognition component. Also interacts (with lower preference) with CUL1, CUL2, CUL3, CUL4A and CUL4B; additional evidence is however required to confirm this result in vivo. Interacts with UBE2F. Interacts with CSNK2B, the interaction is not affected by phosphorylation by CK2. May also interact with DCUN1D1, DCUN1D2, DCUN1D3, DCUN1D4 and DCUN1D5.

The protein localises to the cytoplasm. Its subcellular location is the nucleus. The enzyme catalyses S-ubiquitinyl-[E2 ubiquitin-conjugating enzyme]-L-cysteine + [acceptor protein]-L-lysine = [E2 ubiquitin-conjugating enzyme]-L-cysteine + N(6)-ubiquitinyl-[acceptor protein]-L-lysine.. It carries out the reaction S-[NEDD8-protein]-yl-[E2 NEDD8-conjugating enzyme]-L-cysteine + [cullin]-L-lysine = [E2 NEDD8-conjugating enzyme]-L-cysteine + N(6)-[NEDD8-protein]-yl-[cullin]-L-lysine.. It functions in the pathway protein modification; protein ubiquitination. The protein operates within protein modification; protein neddylation. Its function is as follows. Catalytic component of multiple cullin-5-RING E3 ubiquitin-protein ligase complexes (ECS complexes), which mediate the ubiquitination and subsequent proteasomal degradation of target proteins. It is thereby involved in various biological processes, such as cell cycle progression, signal transduction and transcription. The functional specificity of the E3 ubiquitin-protein ligase ECS complexes depend on the variable SOCS box-containing substrate recognition component. Within ECS complexes, RNF7/RBX2 recruits the E2 ubiquitination enzyme to the complex via its RING-type and brings it into close proximity to the substrate. Catalytic subunit of various SOCS-containing ECS complexes, such as the ECS(SOCS7) complex, that regulate reelin signaling by mediating ubiquitination and degradation of DAB1. The ECS(SOCS2) complex mediates the ubiquitination and subsequent proteasomal degradation of phosphorylated EPOR and GHR. Promotes ubiquitination and degradation of NF1, thereby regulating Ras protein signal transduction. As part of the ECS(ASB9) complex, catalyzes ubiquitination and degradation of CKB. The ECS(SPSB3) complex catalyzes ubiquitination of nuclear CGAS. As part of the ECS(RAB40C) complex, mediates ANKRD28 ubiquitination and degradation, thereby inhibiting protein phosphatase 6 (PP6) complex activity and focal adhesion assembly during cell migration. As part of some ECS complex, catalyzes 'Lys-11'-linked ubiquitination and degradation of BTRC. ECS complexes and ARIH2 collaborate in tandem to mediate ubiquitination of target proteins; ARIH2 mediating addition of the first ubiquitin on CRLs targets. Specifically catalyzes the neddylation of CUL5 via its interaction with UBE2F. Does not catalyze neddylation of other cullins (CUL1, CUL2, CUL3, CUL4A or CUL4B). May play a role in protecting cells from apoptosis induced by redox agents. This is RING-box protein 2 from Mus musculus (Mouse).